Here is a 360-residue protein sequence, read N- to C-terminus: Phosphoserine aminotransferase (360 aa).

Residue Arg41 coordinates L-glutamate. 4 residues coordinate pyridoxal 5'-phosphate: Trp101, Thr152, Asp172, and Gln195. An N6-(pyridoxal phosphate)lysine modification is found at Lys196. Pyridoxal 5'-phosphate is bound at residue 237–238; sequence NT.

It belongs to the class-V pyridoxal-phosphate-dependent aminotransferase family. SerC subfamily. In terms of assembly, homodimer. Pyridoxal 5'-phosphate serves as cofactor.

The protein resides in the cytoplasm. The catalysed reaction is O-phospho-L-serine + 2-oxoglutarate = 3-phosphooxypyruvate + L-glutamate. The enzyme catalyses 4-(phosphooxy)-L-threonine + 2-oxoglutarate = (R)-3-hydroxy-2-oxo-4-phosphooxybutanoate + L-glutamate. It participates in amino-acid biosynthesis; L-serine biosynthesis; L-serine from 3-phospho-D-glycerate: step 2/3. Its pathway is cofactor biosynthesis; pyridoxine 5'-phosphate biosynthesis; pyridoxine 5'-phosphate from D-erythrose 4-phosphate: step 3/5. Catalyzes the reversible conversion of 3-phosphohydroxypyruvate to phosphoserine and of 3-hydroxy-2-oxo-4-phosphonooxybutanoate to phosphohydroxythreonine. This chain is Phosphoserine aminotransferase, found in Burkholderia vietnamiensis (strain G4 / LMG 22486) (Burkholderia cepacia (strain R1808)).